We begin with the raw amino-acid sequence, 145 residues long: Small ribosomal subunit protein uS17c (145 aa).

The transit peptide at 1 to 36 (MLLTTPFVSSPVRVQGNGGSGASPWAGAATALRIQA) directs the protein to the chloroplast. Positions 101-145 (KTKHFLAVPLPPRDTRRKSQLLPPLQSQSQSQDQDQPPTPPPSSD) are disordered. Residues 120-136 (QLLPPLQSQSQSQDQDQ) show a composition bias toward low complexity.

This sequence belongs to the universal ribosomal protein uS17 family. In terms of assembly, part of the 30S ribosomal subunit.

The protein resides in the plastid. It is found in the chloroplast. One of the primary rRNA binding proteins, it binds specifically to the 5'-end of 16S ribosomal RNA. This Oryza sativa subsp. japonica (Rice) protein is Small ribosomal subunit protein uS17c (RPS17).